Reading from the N-terminus, the 620-residue chain is Cryptochrome-1 (620 aa).

In terms of domain architecture, Photolyase/cryptochrome alpha/beta spans 3-132; the sequence is VNAVHWFRKG…EVIVRISHTL (130 aa). Short sequence motifs (LIR) lie at residues 50-54, 82-87, and 151-156; these read NRWRF, DVFPRL, and KRFQTL. FAD is bound at residue serine 252. 4 short sequence motifs (LIR) span residues 255–260, 271–276, 285–290, and 335–339; these read LRFGCL, DLYKKV, SLYGQL, and TGFPW. Position 289 (glutamine 289) interacts with FAD. FAD is bound at residue histidine 355. The LIR 8 motif lies at 379–384; it reads KVFEEL. FAD is bound at residue 387-389; that stretch reads DAD. 5 short sequence motifs (LIR) span residues 395-400, 411-416, 430-435, 486-491, and 492-497; these read GSWMWL, HCYCPV, RRYLPV, QIYQQL, and SRYRGL. The tract at residues 592-620 is disordered; the sequence is GTGISAGKRPNPEEETQSVGPKVQRQSTN.

This sequence belongs to the DNA photolyase class-1 family. In terms of assembly, component of the circadian core oscillator, which includes the CRY proteins, CLOCK or NPAS2, BMAL1 or BMAL2, CSNK1E, and the PER proteins. FAD serves as cofactor. (6R)-5,10-methylene-5,6,7,8-tetrahydrofolate is required as a cofactor. In terms of tissue distribution, expressed in the retina. High levels found in ganglion cells of the retina.

Its subcellular location is the cytoplasm. The protein localises to the nucleus. Transcriptional repressor which forms a core component of the circadian clock. The circadian clock, an internal time-keeping system, regulates various physiological processes through the generation of approximately 24 hour circadian rhythms in gene expression, which are translated into rhythms in metabolism and behavior. It is derived from the Latin roots 'circa' (about) and 'diem' (day) and acts as an important regulator of a wide array of physiological functions including metabolism, sleep, body temperature, blood pressure, endocrine, immune, cardiovascular, and renal function. Consists of two major components: the central clock, residing in the suprachiasmatic nucleus (SCN) of the brain, and the peripheral clocks that are present in nearly every tissue and organ system. Both the central and peripheral clocks can be reset by environmental cues, also known as Zeitgebers (German for 'timegivers'). The predominant Zeitgeber for the central clock is light, which is sensed by retina and signals directly to the SCN. The central clock entrains the peripheral clocks through neuronal and hormonal signals, body temperature and feeding-related cues, aligning all clocks with the external light/dark cycle. Circadian rhythms allow an organism to achieve temporal homeostasis with its environment at the molecular level by regulating gene expression to create a peak of protein expression once every 24 hours to control when a particular physiological process is most active with respect to the solar day. Transcription and translation of core clock components (CLOCK, NPAS2, BMAL1, BMAL2, PER1, PER2, PER3, CRY1 and CRY2) plays a critical role in rhythm generation, whereas delays imposed by post-translational modifications (PTMs) are important for determining the period (tau) of the rhythms (tau refers to the period of a rhythm and is the length, in time, of one complete cycle). A diurnal rhythm is synchronized with the day/night cycle, while the ultradian and infradian rhythms have a period shorter and longer than 24 hours, respectively. Disruptions in the circadian rhythms contribute to the pathology of cardiovascular diseases, cancer, metabolic syndromes and aging. A transcription/translation feedback loop (TTFL) forms the core of the molecular circadian clock mechanism. Transcription factors, CLOCK or NPAS2 and BMAL1 or BMAL2, form the positive limb of the feedback loop, act in the form of a heterodimer and activate the transcription of core clock genes and clock-controlled genes (involved in key metabolic processes), harboring E-box elements (5'-CACGTG-3') within their promoters. The core clock genes: PER1/2/3 and CRY1/2 which are transcriptional repressors form the negative limb of the feedback loop and interact with the CLOCK|NPAS2-BMAL1|BMAL2 heterodimer inhibiting its activity and thereby negatively regulating their own expression. This heterodimer also activates nuclear receptors NR1D1, NR1D2, RORA, RORB and RORG, which form a second feedback loop and which activate and repress BMAL1 transcription, respectively. CRY1 and CRY2 have redundant functions but also differential and selective contributions at least in defining the pace of the SCN circadian clock and its circadian transcriptional outputs. More potent transcriptional repressor in cerebellum and liver than CRY2, though more effective in lengthening the period of the SCN oscillator. On its side, CRY2 seems to play a critical role in tuning SCN circadian period by opposing the action of CRY1. With CRY2, is dispensable for circadian rhythm generation but necessary for the development of intercellular networks for rhythm synchrony. Capable of translocating circadian clock core proteins such as PER proteins to the nucleus. Interacts with CLOCK:BMAL1 independently of PER proteins and is found at CLOCK:BMAL1-bound sites, suggesting that CRY may act as a molecular gatekeeper to maintain CLOCK:BMAL1 in a poised and repressed state until the proper time for transcriptional activation. This is Cryptochrome-1 (CRY1) from Sylvia borin (Garden warbler).